Here is a 734-residue protein sequence, read N- to C-terminus: Photosystem I P700 chlorophyll a apoprotein A2 (734 aa).

Transmembrane regions (helical) follow at residues I46–A69, L135–Q158, L175–I199, I273–Y291, I330–Y353, A369–I395, A417–H439, and F517–V535. Positions 559 and 568 each coordinate [4Fe-4S] cluster. A run of 2 helical transmembrane segments spans residues A575 to W596 and L643 to I665. Chlorophyll a is bound by residues H654, M662, and Y670. W671 is a binding site for phylloquinone. A helical membrane pass occupies residues L707 to A727.

It belongs to the PsaA/PsaB family. As to quaternary structure, the PsaA/B heterodimer binds the P700 chlorophyll special pair and subsequent electron acceptors. PSI consists of a core antenna complex that captures photons, and an electron transfer chain that converts photonic excitation into a charge separation. The eukaryotic PSI reaction center is composed of at least 11 subunits. P700 is a chlorophyll a/chlorophyll a' dimer, A0 is one or more chlorophyll a, A1 is one or both phylloquinones and FX is a shared 4Fe-4S iron-sulfur center. serves as cofactor.

The protein localises to the plastid. The protein resides in the chloroplast thylakoid membrane. The catalysed reaction is reduced [plastocyanin] + hnu + oxidized [2Fe-2S]-[ferredoxin] = oxidized [plastocyanin] + reduced [2Fe-2S]-[ferredoxin]. Functionally, psaA and PsaB bind P700, the primary electron donor of photosystem I (PSI), as well as the electron acceptors A0, A1 and FX. PSI is a plastocyanin-ferredoxin oxidoreductase, converting photonic excitation into a charge separation, which transfers an electron from the donor P700 chlorophyll pair to the spectroscopically characterized acceptors A0, A1, FX, FA and FB in turn. Oxidized P700 is reduced on the lumenal side of the thylakoid membrane by plastocyanin. This is Photosystem I P700 chlorophyll a apoprotein A2 from Liriodendron tulipifera (Tuliptree).